The primary structure comprises 554 residues: Glucose-6-phosphate isomerase (554 aa).

Catalysis depends on glutamate 359, which acts as the Proton donor. Catalysis depends on residues histidine 390 and lysine 518.

Belongs to the GPI family.

Its subcellular location is the cytoplasm. It carries out the reaction alpha-D-glucose 6-phosphate = beta-D-fructose 6-phosphate. It participates in carbohydrate biosynthesis; gluconeogenesis. Its pathway is carbohydrate degradation; glycolysis; D-glyceraldehyde 3-phosphate and glycerone phosphate from D-glucose: step 2/4. Functionally, catalyzes the reversible isomerization of glucose-6-phosphate to fructose-6-phosphate. This Pseudomonas fluorescens protein is Glucose-6-phosphate isomerase.